The following is a 341-amino-acid chain: UDP-N-acetylenolpyruvoylglucosamine reductase (341 aa).

The FAD-binding PCMH-type domain occupies 13 to 185 (FGVEQSCLSM…TAVGLRLPKA (173 aa)). The active site involves R161. Catalysis depends on S231, which acts as the Proton donor. Residue E327 is part of the active site.

The protein belongs to the MurB family. FAD is required as a cofactor.

It is found in the cytoplasm. It carries out the reaction UDP-N-acetyl-alpha-D-muramate + NADP(+) = UDP-N-acetyl-3-O-(1-carboxyvinyl)-alpha-D-glucosamine + NADPH + H(+). It participates in cell wall biogenesis; peptidoglycan biosynthesis. In terms of biological role, cell wall formation. The polypeptide is UDP-N-acetylenolpyruvoylglucosamine reductase (Shewanella sp. (strain MR-4)).